Consider the following 370-residue polypeptide: DNA replication and repair protein RecF (370 aa).

Position 30–37 (30–37 (GQNGMGKT)) interacts with ATP.

It belongs to the RecF family.

The protein resides in the cytoplasm. Functionally, the RecF protein is involved in DNA metabolism; it is required for DNA replication and normal SOS inducibility. RecF binds preferentially to single-stranded, linear DNA. It also seems to bind ATP. In Bacteroides fragilis (strain ATCC 25285 / DSM 2151 / CCUG 4856 / JCM 11019 / LMG 10263 / NCTC 9343 / Onslow / VPI 2553 / EN-2), this protein is DNA replication and repair protein RecF.